A 363-amino-acid polypeptide reads, in one-letter code: UDP-N-acetylglucosamine--N-acetylmuramyl-(pentapeptide) pyrophosphoryl-undecaprenol N-acetylglucosamine transferase (363 aa).

UDP-N-acetyl-alpha-D-glucosamine-binding positions include 14–16 (TGG), asparagine 122, arginine 163, serine 190, and glutamine 285.

The protein belongs to the glycosyltransferase 28 family. MurG subfamily.

Its subcellular location is the cell inner membrane. It carries out the reaction di-trans,octa-cis-undecaprenyl diphospho-N-acetyl-alpha-D-muramoyl-L-alanyl-D-glutamyl-meso-2,6-diaminopimeloyl-D-alanyl-D-alanine + UDP-N-acetyl-alpha-D-glucosamine = di-trans,octa-cis-undecaprenyl diphospho-[N-acetyl-alpha-D-glucosaminyl-(1-&gt;4)]-N-acetyl-alpha-D-muramoyl-L-alanyl-D-glutamyl-meso-2,6-diaminopimeloyl-D-alanyl-D-alanine + UDP + H(+). It participates in cell wall biogenesis; peptidoglycan biosynthesis. In terms of biological role, cell wall formation. Catalyzes the transfer of a GlcNAc subunit on undecaprenyl-pyrophosphoryl-MurNAc-pentapeptide (lipid intermediate I) to form undecaprenyl-pyrophosphoryl-MurNAc-(pentapeptide)GlcNAc (lipid intermediate II). This Prochlorococcus marinus (strain AS9601) protein is UDP-N-acetylglucosamine--N-acetylmuramyl-(pentapeptide) pyrophosphoryl-undecaprenol N-acetylglucosamine transferase.